A 177-amino-acid chain; its full sequence is Large ribosomal subunit protein uL6 (177 aa).

It belongs to the universal ribosomal protein uL6 family. As to quaternary structure, part of the 50S ribosomal subunit.

This protein binds to the 23S rRNA, and is important in its secondary structure. It is located near the subunit interface in the base of the L7/L12 stalk, and near the tRNA binding site of the peptidyltransferase center. The sequence is that of Large ribosomal subunit protein uL6 from Teredinibacter turnerae (strain ATCC 39867 / T7901).